Consider the following 487-residue polypeptide: Betaine aldehyde dehydrogenase (487 aa).

2 residues coordinate K(+): Ser26 and Asp93. Position 150-152 (150-152) interacts with NAD(+); it reads GAW. Lys162 functions as the Charge relay system in the catalytic mechanism. NAD(+)-binding positions include 176–179 and 229–232; these read KPSE and SVPT. Leu244 contacts K(+). The active-site Proton acceptor is the Glu250. Residues Gly252, Cys284, and Glu384 each contribute to the NAD(+) site. The Nucleophile role is filled by Cys284. Position 284 is a cysteine sulfenic acid (-SOH) (Cys284). K(+) is bound by residues Lys454 and Gly457. The active-site Charge relay system is the Glu461.

Belongs to the aldehyde dehydrogenase family. Dimer of dimers. Requires K(+) as cofactor.

The catalysed reaction is betaine aldehyde + NAD(+) + H2O = glycine betaine + NADH + 2 H(+). The protein operates within amine and polyamine biosynthesis; betaine biosynthesis via choline pathway; betaine from betaine aldehyde: step 1/1. Its function is as follows. Involved in the biosynthesis of the osmoprotectant glycine betaine. Catalyzes the irreversible oxidation of betaine aldehyde to the corresponding acid. This chain is Betaine aldehyde dehydrogenase, found in Rhizobium leguminosarum bv. trifolii (strain WSM2304).